Reading from the N-terminus, the 538-residue chain is MFRRNIITSAILLMAPLAFSAQSLAESLTVEQRLELLEKALRETQSELKKYKDEEKKKYTPATVNRSVSTNDQGYAANPFPTSRAAKPDAVLVKNEEKNASETGSIYSSMTLKDFSKFVKDEIGFSYNGYYRSGWGTASHGSPKSWAIGSLGRFGNEYSGWFDLQLKQRVYNENGKRVDAIVMMDGNVGQQYSTGWFGDNAGGENFMQFSDMYVTTKGFLPFAPEADFWVGKHGAPKIEIQMLDWKTQRTDAAAGVGLENWKVGPGKIDIALVREDVDDYDRSLQNKQQINTNTIDLRYKDIPLWDKATLMVSGRYVSANESASEKDNQDNNGYYDWKETWMFGTSLTQKFDKGGFNEFSFLVANNSIASNFGRYAGASPFTTFNGRYYGDHTGGTAVRLTSQGEAYIGDHFIVANAIVYSFGNDIYSYETGAHSDFESIRAVVRPAYIWDQYNQTGVELGYFTQQNKDANSNKYNESGYKTTLFHTFKVNTSMLTSRPEIRFYATYIKALENELDGFTFEDNKDDQFAVGAQAEIWW.

The N-terminal stretch at 1-25 (MFRRNIITSAILLMAPLAFSAQSLA) is a signal peptide.

It belongs to the porin LamB (TC 1.B.3) family.

It is found in the cell outer membrane. In terms of biological role, may be a sugar porin with a broad carbohydrate specificity. The sequence is that of Putative outer membrane porin BglH (bglH) from Escherichia coli O6:H1 (strain CFT073 / ATCC 700928 / UPEC).